The primary structure comprises 507 residues: ATP synthase subunit alpha, chloroplastic (507 aa).

170–177 (GDRQTGKT) is a binding site for ATP.

Belongs to the ATPase alpha/beta chains family. In terms of assembly, F-type ATPases have 2 components, CF(1) - the catalytic core - and CF(0) - the membrane proton channel. CF(1) has five subunits: alpha(3), beta(3), gamma(1), delta(1), epsilon(1). CF(0) has four main subunits: a, b, b' and c.

The protein resides in the plastid. It is found in the chloroplast thylakoid membrane. It catalyses the reaction ATP + H2O + 4 H(+)(in) = ADP + phosphate + 5 H(+)(out). In terms of biological role, produces ATP from ADP in the presence of a proton gradient across the membrane. The alpha chain is a regulatory subunit. This is ATP synthase subunit alpha, chloroplastic from Piper cenocladum (Ant piper).